A 129-amino-acid chain; its full sequence is D-ribose pyranase (129 aa).

H20 serves as the catalytic Proton donor. Substrate is bound by residues D28, H96, and 118–120 (YAN).

The protein belongs to the RbsD / FucU family. RbsD subfamily. Homodecamer.

It localises to the cytoplasm. It catalyses the reaction beta-D-ribopyranose = beta-D-ribofuranose. It participates in carbohydrate metabolism; D-ribose degradation; D-ribose 5-phosphate from beta-D-ribopyranose: step 1/2. Its function is as follows. Catalyzes the interconversion of beta-pyran and beta-furan forms of D-ribose. This Streptomyces coelicolor (strain ATCC BAA-471 / A3(2) / M145) protein is D-ribose pyranase.